A 1613-amino-acid chain; its full sequence is Reverse gyrase (1613 aa).

Residues 1-38 form an RG N-terminal-type zinc finger; that stretch reads MIPMIYKEMCPNCNGEITSERLAIGVCEKCLKEENVFE. Positions 10, 13, 27, and 30 each coordinate Zn(2+). ATP is bound by residues Gln83 and 100–107; that span reads VPTGVGKS. Residues 87–291 form the Helicase ATP-binding domain; that stretch reads AKRVLKNKSF…LYRELLDFEI (205 aa). The short motif at 203-206 is the DEAD box element; that stretch reads DDVD. Positions 310-525 constitute a Helicase C-terminal domain; sequence SKEKILEYIK…IDEVNLEELI (216 aa). The interval 546-1613 is topoisomerase I; that stretch reads DLLKSVLMVV…ALHEEILSIR (1068 aa). The region spanning 550 to 712 is the Toprim domain; the sequence is SVLMVVESPN…NIYRVGFNEI (163 aa). The Mg(2+) site is built by Glu556 and Asp681. The Topo IA-type catalytic domain occupies 733 to 1613; it reads DENKVKGQVV…ALHEEILSIR (881 aa). In terms of domain architecture, DOD-type homing endonuclease spans 1070-1199; it reads FAGLVLGDGS…IGIYLNSIGI (130 aa). Tyr1363 functions as the O-(5'-phospho-DNA)-tyrosine intermediate in the catalytic mechanism.

This sequence in the N-terminal section; belongs to the DEAD box helicase family. DDVD subfamily. It in the C-terminal section; belongs to the type IA topoisomerase family. As to quaternary structure, monomer. Requires Zn(2+) as cofactor. Mg(2+) is required as a cofactor. Post-translationally, this protein undergoes a protein self splicing that involves a post-translational excision of the intervening region (intein) followed by peptide ligation.

It is found in the cytoplasm. The catalysed reaction is ATP + H2O = ADP + phosphate + H(+). Its function is as follows. Modifies the topological state of DNA by introducing positive supercoils in an ATP-dependent process, increasing the linking number in steps of +1. Binds to single-stranded DNA, transiently cleaves and then rejoins the ends, introducing a positive supercoil in the process. The scissile phosphodiester is attacked by the catalytic tyrosine of the enzyme, resulting in the formation of a DNA-(5'-phosphotyrosyl)-enzyme intermediate. Probably involved in rewinding DNA strands in regions of the chromosome that have opened up to allow replication, transcription, DNA repair and/or for DNA protection. In Methanocaldococcus jannaschii (strain ATCC 43067 / DSM 2661 / JAL-1 / JCM 10045 / NBRC 100440) (Methanococcus jannaschii), this protein is Reverse gyrase.